A 117-amino-acid chain; its full sequence is Acrylate reductase cytochrome subunit (117 aa).

The N-terminal stretch at 1–22 (MKMYKLMLGLVLAGLVSLSAQA) is a signal peptide. Heme c-binding residues include histidine 29, cysteine 37, cysteine 40, histidine 41, cysteine 54, cysteine 57, histidine 58, histidine 79, histidine 83, cysteine 90, cysteine 93, histidine 94, histidine 97, cysteine 104, cysteine 107, and histidine 108.

The ArdAB flavocytochrome c is composed of a FAD-containing subunit (ArdA) and a heme c-containing subunit (ArdB). Requires heme c as cofactor.

It is found in the periplasm. Methacrylate acts as a competitive inhibitor of the acrylate reductase activity and suppresses the reductase activity in dose-dependent manner. Functionally, heme c-containing subunit of the ArdAB flavocytochrome c, which catalyzes the reduction of acrylate to propanoate and supports dimethylsulfoniopropionate-dependent anaerobic respiration. In vitro, can use the artificial electron donor methyl viologen. The natural electron donor is probably a low-potential cytochrome c. Also shows weak activity toward methacrylate in vitro (at a 22-fold lower rate) but cannot use other tested 2-enoates, including crotonic, fumaric, sorbic, urocanic, cinnamic, p-coumaric, caffeic or ferulic acids. The protein catalyzes a unidirectional reaction and cannot oxidize propanoate with phenazine metasulfate and dichlorophenolindophenol as electron acceptors. The chain is Acrylate reductase cytochrome subunit from Shewanella woodyi (strain ATCC 51908 / MS32).